Here is a 321-residue protein sequence, read N- to C-terminus: MPRDTNNRHRSTPYERPTLEDLRRQLQDNLDSINRRDRMQEEQEENLRYQVRRRQRQNQLRSIQMEQQRMMAELNNEPVINFKFECSVCLETYSQQSNDTCPFLIPTTCDHGFCFKCVINLQSNAMNIPHSTVCCPLCNTQVKMWRSLKPNAVVTCKFYKKTQERVPPVQQYKNIIKVLQERSVISVEDNDNNCDINMENQAKIAALEAELEEEKNHSDQVASENRQLIEENTRLNEQIQELQHQVRTLVPQRGITVNQQIGRDDSAPAELNERFRSLVYSTISELFIENGVHSIQNYVYAGTSAASSCDVNVTVNFGFEN.

Residues Cys-86–Asn-139 form an RING-type zinc finger. Residues Leu-228–Leu-249 form a leucine-zipper region.

Its subcellular location is the host nucleus. Plays some regulatory role in both viral DNA replication and transcriptional transactivation. In Lepidoptera (butterflies and moths), this protein is Major immediate early protein (PE38).